Consider the following 174-residue polypeptide: Peptide methionine sulfoxide reductase MsrA (174 aa).

C10 is an active-site residue.

It belongs to the MsrA Met sulfoxide reductase family.

It catalyses the reaction L-methionyl-[protein] + [thioredoxin]-disulfide + H2O = L-methionyl-(S)-S-oxide-[protein] + [thioredoxin]-dithiol. It carries out the reaction [thioredoxin]-disulfide + L-methionine + H2O = L-methionine (S)-S-oxide + [thioredoxin]-dithiol. Functionally, has an important function as a repair enzyme for proteins that have been inactivated by oxidation. Catalyzes the reversible oxidation-reduction of methionine sulfoxide in proteins to methionine. The sequence is that of Peptide methionine sulfoxide reductase MsrA from Arthrobacter sp. (strain FB24).